A 146-amino-acid chain; its full sequence is Snaclec CTL-Eoc124 (146 aa).

An N-terminal signal peptide occupies residues 1 to 23; the sequence is MGRFISVSFGLLVVFLSLSGTGA. Disulfide bonds link Cys-25-Cys-36, Cys-53-Cys-142, and Cys-119-Cys-134. In terms of domain architecture, C-type lectin spans 32–143; the sequence is YQGHCYRVFN…CSRTNNVACK (112 aa).

This sequence belongs to the snaclec family. Heterodimer; disulfide-linked. In terms of tissue distribution, expressed by the venom gland.

It is found in the secreted. Interferes with one step of hemostasis (modulation of platelet aggregation, or coagulation cascade, for example). The sequence is that of Snaclec CTL-Eoc124 from Echis ocellatus (Ocellated saw-scaled viper).